The chain runs to 521 residues: Lysine--tRNA ligase (521 aa).

Residues 32-40 carry the 'HIGH' region motif; that stretch reads PSGTVHIGN. Positions 280–284 match the 'KMSKS' region motif; that stretch reads KISSS.

This sequence belongs to the class-I aminoacyl-tRNA synthetase family.

It localises to the cytoplasm. It carries out the reaction tRNA(Lys) + L-lysine + ATP = L-lysyl-tRNA(Lys) + AMP + diphosphate. The polypeptide is Lysine--tRNA ligase (lysS) (Borreliella burgdorferi (strain ATCC 35210 / DSM 4680 / CIP 102532 / B31) (Borrelia burgdorferi)).